The primary structure comprises 507 residues: Steroid (22S)-hydroxylase (507 aa).

Residues 12-32 (LLFFLPYILLALLTFYTTTVA) form a helical membrane-spanning segment. Residue cysteine 444 participates in heme binding.

The protein belongs to the cytochrome P450 family. The cofactor is heme.

It is found in the membrane. It catalyses the reaction a C27-steroid + reduced [NADPH--hemoprotein reductase] + O2 = a (22S)-22-hydroxy C27-steroid + oxidized [NADPH--hemoprotein reductase] + H2O + H(+). The enzyme catalyses a C28-steroid + reduced [NADPH--hemoprotein reductase] + O2 = a (22S)-22-hydroxy C28-steroid + oxidized [NADPH--hemoprotein reductase] + H2O + H(+). The catalysed reaction is campesterol + reduced [NADPH--hemoprotein reductase] + O2 = (22S)-22-hydroxycampesterol + oxidized [NADPH--hemoprotein reductase] + H2O + H(+). It carries out the reaction campestanol + reduced [NADPH--hemoprotein reductase] + O2 = 6-deoxycathasterone + oxidized [NADPH--hemoprotein reductase] + H2O + H(+). The protein operates within plant hormone biosynthesis; brassinosteroid biosynthesis. Involved in reduction steps of the biosynthesis of plant campesterol-derivative steroids, ending to castasterone (CS) but missing brassinolide (BL). Catalyzes the conversion of campesterol (CR) to (22S)-22-hydroxycampesterol (22-OHCR, 22-hydroxyCR) and of campestanol (CN) to 6-deoxycathasterone (6-deoxoCT). The protein is Steroid (22S)-hydroxylase of Brachypodium distachyon (Purple false brome).